The following is a 557-amino-acid chain: Membrane protein insertase YidC (557 aa).

A helical membrane pass occupies residues 1–21 (MNWLRNSLIAAILVITYVLFI). The tract at residues 52-71 (SDDAVASSATEESDVPEVSV) is disordered. 5 helical membrane-spanning segments follow: residues 346–366 (TIDY…LDFI), 369–389 (LVGN…AVFF), 439–459 (FGGC…YWMI), 470–490 (FFLW…PLLM), and 517–537 (PIGF…YWVV).

It belongs to the OXA1/ALB3/YidC family. Type 1 subfamily. As to quaternary structure, interacts with the Sec translocase complex via SecD. Specifically interacts with transmembrane segments of nascent integral membrane proteins during membrane integration.

The protein localises to the cell inner membrane. Its function is as follows. Required for the insertion and/or proper folding and/or complex formation of integral membrane proteins into the membrane. Involved in integration of membrane proteins that insert both dependently and independently of the Sec translocase complex, as well as at least some lipoproteins. Aids folding of multispanning membrane proteins. The chain is Membrane protein insertase YidC from Saccharophagus degradans (strain 2-40 / ATCC 43961 / DSM 17024).